Reading from the N-terminus, the 159-residue chain is Ribosomal RNA large subunit methyltransferase H (159 aa).

S-adenosyl-L-methionine-binding positions include Leu76, Gly107, and 126–131 (LSKLTM).

It belongs to the RNA methyltransferase RlmH family. As to quaternary structure, homodimer.

Its subcellular location is the cytoplasm. The enzyme catalyses pseudouridine(1915) in 23S rRNA + S-adenosyl-L-methionine = N(3)-methylpseudouridine(1915) in 23S rRNA + S-adenosyl-L-homocysteine + H(+). Its function is as follows. Specifically methylates the pseudouridine at position 1915 (m3Psi1915) in 23S rRNA. The polypeptide is Ribosomal RNA large subunit methyltransferase H (Acinetobacter baumannii (strain AB307-0294)).